Reading from the N-terminus, the 96-residue chain is Small ribosomal subunit protein bS18 (96 aa).

It belongs to the bacterial ribosomal protein bS18 family. In terms of assembly, part of the 30S ribosomal subunit. Forms a tight heterodimer with protein bS6.

In terms of biological role, binds as a heterodimer with protein bS6 to the central domain of the 16S rRNA, where it helps stabilize the platform of the 30S subunit. This chain is Small ribosomal subunit protein bS18, found in Gluconobacter oxydans (strain 621H) (Gluconobacter suboxydans).